Reading from the N-terminus, the 199-residue chain is Ras-related and estrogen-regulated growth inhibitor (199 aa).

GTP contacts are provided by residues 13–20 (GRAGVGKS), 60–64 (DTAGQ), and 118–121 (NKAD).

It belongs to the small GTPase superfamily. Ras family. In terms of tissue distribution, detected in heart, brain, placenta, lung, liver, skin, kidney and pancreas. Detected in estrogen receptor-positive breast-derived cell lines, but not in estrogen receptor-negative cell lines. Expression is decreased or lost in a significant proportion of primary breast tumors with poor clinical prognosis.

The protein resides in the cytoplasm. The catalysed reaction is GTP + H2O = GDP + phosphate + H(+). Its function is as follows. Binds GDP/GTP and possesses intrinsic GTPase activity. Has higher affinity for GDP than for GTP. In cell lines overexpression leads to a reduction in the rate of proliferation, colony formation and in tumorigenic potential. This is Ras-related and estrogen-regulated growth inhibitor (RERG) from Homo sapiens (Human).